The primary structure comprises 380 residues: Large ribosomal subunit protein mL38 (380 aa).

The transit peptide at 1-26 (MAAPWWRAAFSVTGRCRGISTSASLS) directs the protein to the mitochondrion. A coiled-coil region spans residues 98 to 123 (SRTQKLQERKRFLQELRANSEEERAA).

Belongs to the phosphatidylethanolamine-binding protein family. Mitochondrion-specific ribosomal protein mL38 subfamily. Component of the mitochondrial ribosome large subunit (39S) which comprises a 16S rRNA and about 50 distinct proteins.

The protein resides in the mitochondrion. The protein is Large ribosomal subunit protein mL38 (Mrpl38) of Rattus norvegicus (Rat).